The sequence spans 252 residues: MQICLMDETGATDGALSVLAARWGLEHDEDNPMALVLTPQHLELRKRDEPKLGGIFVDFVGGAMAHRRKFGGGRGEAVAKAVGIKGDYLPDVVDATAGLGRDAFVLASVGCRVRMLERNPVVAALLDDGLTRGYADADIGGWLQERLQLIHASSLTALTDITPRPQVVYLDPMFPHRQKSALVKKEMRVFQSLVGPDLDADGLLEPARQLATKRVVVKRPDYAPPLADVATPNAIVTKEHRFDIYAGTPLTE.

Residues 101–102, 117–118, 153–154, and Asp171 each bind S-adenosyl-L-methionine; these read RD, ER, and SS.

Belongs to the methyltransferase superfamily. RsmJ family.

The protein localises to the cytoplasm. The catalysed reaction is guanosine(1516) in 16S rRNA + S-adenosyl-L-methionine = N(2)-methylguanosine(1516) in 16S rRNA + S-adenosyl-L-homocysteine + H(+). Functionally, specifically methylates the guanosine in position 1516 of 16S rRNA. In Salmonella typhi, this protein is Ribosomal RNA small subunit methyltransferase J.